Reading from the N-terminus, the 902-residue chain is 4-hydroxyphenylacetate decarboxylase glycyl radical subunit (902 aa).

Residues 38 to 774 (KRAEDLLDVY…ATLATPDGRL (737 aa)) enclose the PFL domain. Ser348 and Cys507 together coordinate 4-hydroxyphenylacetate. Cys507 serves as the catalytic Cysteine radical intermediate. Catalysis depends on Glu509, which acts as the Proton donor. 2 residues coordinate 4-hydroxyphenylacetate: His540 and Glu641. A Glycine radical domain is found at 782-902 (GSVSAYAGTD…VIARTEYEGV (121 aa)). The residue at position 877 (Gly877) is a Glycine radical.

It belongs to the glycyl radical enzyme (GRE) family. HPAD subfamily. As to quaternary structure, heterooctamer consisting of 4 large (HpdB) subunits and 4 small (HpdC) subunits. Also forms a catalytically inactive homodimer. Post-translationally, phosphorylated on serine. Phosphorylation may trigger the formation of the active heterooctamers and thereby regulates enzyme activity. Requires the activating protein HpdA to generate the key active site glycyl radical that is involved in catalysis.

The enzyme catalyses 4-hydroxyphenylacetate + H(+) = 4-methylphenol + CO2. It catalyses the reaction 3,4-dihydroxyphenylacetate + H(+) = 4-methylcatechol + CO2. The catalysed reaction is 2-hydroxy-2-(4-hydroxyphenyl)acetate + H(+) = 4-hydroxybenzyl alcohol + CO2. Enzyme activity catalyzed by the HPA decarboxylase complex is rapidly and irreversibly inactivated by oxygen. Competitively inhibited by p-hydroxyphenylacetamide. Not inhibited by m- or o-hydroxyphenyl-acetate, p-hydroxybenzoate or p-hydroxyphenylpropionate. Functionally, glycyl radical subunit of the HPA decarboxylase that decarboxylates phenylacetates with a hydroxyl group in the p-position. Active toward 4-hydroxyphenylacetate, 3,4-dihydroxyphenylacetate and to a lesser extent p-hydroxymandelate (2-hydroxy-2-(4-hydroxyphenyl)acetate), forming 4-methylphenol, 4-methylcatechol and 4-hydroxybenzylalcohol, respectively. Is likely involved in the catabolism of aromatic amino acids such as tyrosine fermentation. 4-methylphenol (p-cresol) formation provides metabolic toxicity, which may benefit the pathogen C.difficile by suppression of the endogenous gastrointestinal microflora, allowing the development of gastrointestinal infections. The large subunit is the catalytic subunit that binds the substrate. This Clostridioides difficile (Peptoclostridium difficile) protein is 4-hydroxyphenylacetate decarboxylase glycyl radical subunit.